The chain runs to 458 residues: Exodeoxyribonuclease 7 large subunit (458 aa).

It belongs to the XseA family. Heterooligomer composed of large and small subunits.

The protein resides in the cytoplasm. It carries out the reaction Exonucleolytic cleavage in either 5'- to 3'- or 3'- to 5'-direction to yield nucleoside 5'-phosphates.. In terms of biological role, bidirectionally degrades single-stranded DNA into large acid-insoluble oligonucleotides, which are then degraded further into small acid-soluble oligonucleotides. The sequence is that of Exodeoxyribonuclease 7 large subunit from Geobacter sp. (strain M21).